Consider the following 117-residue polypeptide: Ribosome-binding factor A (117 aa).

This sequence belongs to the RbfA family. In terms of assembly, monomer. Binds 30S ribosomal subunits, but not 50S ribosomal subunits or 70S ribosomes.

It localises to the cytoplasm. One of several proteins that assist in the late maturation steps of the functional core of the 30S ribosomal subunit. Associates with free 30S ribosomal subunits (but not with 30S subunits that are part of 70S ribosomes or polysomes). Required for efficient processing of 16S rRNA. May interact with the 5'-terminal helix region of 16S rRNA. This Syntrophobacter fumaroxidans (strain DSM 10017 / MPOB) protein is Ribosome-binding factor A.